The sequence spans 459 residues: Chaperone SurA (459 aa).

The signal sequence occupies residues 1–23 (MNHRLVALSVASLALLAPLTVPA). PpiC domains are found at residues 197-301 (VQQI…KVLE) and 312-411 (VTQS…QLME).

The protein resides in the periplasm. It carries out the reaction [protein]-peptidylproline (omega=180) = [protein]-peptidylproline (omega=0). Its function is as follows. Chaperone involved in the correct folding and assembly of outer membrane proteins. Recognizes specific patterns of aromatic residues and the orientation of their side chains, which are found more frequently in integral outer membrane proteins. May act in both early periplasmic and late outer membrane-associated steps of protein maturation. This Albidiferax ferrireducens (strain ATCC BAA-621 / DSM 15236 / T118) (Rhodoferax ferrireducens) protein is Chaperone SurA.